The chain runs to 640 residues: SH3 domain-containing protein 21 (640 aa).

Residues 1–60 are disordered; the sequence is MVQSELQLQPRAGGRAEAASWGDRGNDKGGLGNPDMPSVSPGPQRPPKLSSLAYDSPPDY. The SH3 domain maps to 65–126; sequence SHPEVYRVLF…PDNFVLPPPP (62 aa). 3 disordered regions span residues 133-361, 401-551, and 618-640; these read RKVV…PLGD, YFVA…PDSQ, and VQVM…TQTY. Residues 177 to 186 are compositionally biased toward basic and acidic residues; that stretch reads PSRDSQKLTS. Residues 210–220 are compositionally biased toward polar residues; the sequence is TQTPQQRSVSS. 3 stretches are compositionally biased toward basic and acidic residues: residues 401 to 416, 459 to 469, and 494 to 532; these read YFVA…EAHT, ALEKPHPHEEA, and RPLR…EVPP. The stretch at 572–626 forms a coiled coil; it reads VDVTSLRGEVESLRRALELMEVQLERKLTDIWEELKSEKEQRRRLEVQVMQGTQK. Residues 621 to 640 show a composition bias toward polar residues; sequence MQGTQKSQTPRVIHTQTQTY.

The protein is SH3 domain-containing protein 21 (SH3D21) of Homo sapiens (Human).